The primary structure comprises 343 residues: Cell invasion protein SipD (343 aa).

Positions 1–26 (MLNIQNYSASPHPGIVAERPQTPSAS) are disordered. Positions 295 to 322 (KAQEENMKTTLQTLTQKYSNANSLYDNL) form a coiled coil.

It belongs to the invasin protein D family.

It is found in the secreted. Its function is as follows. Required for translocation of effector proteins via the type III secretion system SPI-1, which is essential for an efficient bacterial internalization. Probably acts by modulating the secretion of SipA, SipB, and SipC. The sequence is that of Cell invasion protein SipD (sipD) from Salmonella typhimurium (strain LT2 / SGSC1412 / ATCC 700720).